The sequence spans 86 residues: Small ribosomal subunit protein bS20 (86 aa).

This sequence belongs to the bacterial ribosomal protein bS20 family.

Its function is as follows. Binds directly to 16S ribosomal RNA. The polypeptide is Small ribosomal subunit protein bS20 (Mycolicibacterium gilvum (strain PYR-GCK) (Mycobacterium gilvum (strain PYR-GCK))).